The primary structure comprises 272 residues: Thiazole synthase (272 aa).

Lys111 serves as the catalytic Schiff-base intermediate with DXP. 1-deoxy-D-xylulose 5-phosphate contacts are provided by residues Gly172, 198–199 (AG), and 220–221 (NS). The tract at residues 249-272 (SGRLPRRDQASASSPTTGLVQSPQ) is disordered. Polar residues predominate over residues 258 to 272 (ASASSPTTGLVQSPQ).

The protein belongs to the ThiG family. As to quaternary structure, homotetramer. Forms heterodimers with either ThiH or ThiS.

The protein resides in the cytoplasm. It catalyses the reaction [ThiS sulfur-carrier protein]-C-terminal-Gly-aminoethanethioate + 2-iminoacetate + 1-deoxy-D-xylulose 5-phosphate = [ThiS sulfur-carrier protein]-C-terminal Gly-Gly + 2-[(2R,5Z)-2-carboxy-4-methylthiazol-5(2H)-ylidene]ethyl phosphate + 2 H2O + H(+). It participates in cofactor biosynthesis; thiamine diphosphate biosynthesis. Catalyzes the rearrangement of 1-deoxy-D-xylulose 5-phosphate (DXP) to produce the thiazole phosphate moiety of thiamine. Sulfur is provided by the thiocarboxylate moiety of the carrier protein ThiS. In vitro, sulfur can be provided by H(2)S. In Synechococcus sp. (strain CC9605), this protein is Thiazole synthase.